We begin with the raw amino-acid sequence, 87 residues long: Small ribosomal subunit protein uS15 (87 aa).

The protein belongs to the universal ribosomal protein uS15 family. As to quaternary structure, part of the 30S ribosomal subunit. Forms a bridge to the 50S subunit in the 70S ribosome, contacting the 23S rRNA.

Its function is as follows. One of the primary rRNA binding proteins, it binds directly to 16S rRNA where it helps nucleate assembly of the platform of the 30S subunit by binding and bridging several RNA helices of the 16S rRNA. Forms an intersubunit bridge (bridge B4) with the 23S rRNA of the 50S subunit in the ribosome. This is Small ribosomal subunit protein uS15 from Cutibacterium acnes (strain DSM 16379 / KPA171202) (Propionibacterium acnes).